The primary structure comprises 164 residues: Sec-independent protein translocase protein TatB (164 aa).

A helical membrane pass occupies residues 1–21 (MIDIGLSKMALIGAVALIVIG). Residues 81–102 (ASEFQKDWESGTSDAAATGHDG) are disordered.

The protein belongs to the TatB family. As to quaternary structure, the Tat system comprises two distinct complexes: a TatABC complex, containing multiple copies of TatA, TatB and TatC subunits, and a separate TatA complex, containing only TatA subunits. Substrates initially bind to the TatABC complex, which probably triggers association of the separate TatA complex to form the active translocon.

Its subcellular location is the cell inner membrane. Part of the twin-arginine translocation (Tat) system that transports large folded proteins containing a characteristic twin-arginine motif in their signal peptide across membranes. Together with TatC, TatB is part of a receptor directly interacting with Tat signal peptides. TatB may form an oligomeric binding site that transiently accommodates folded Tat precursor proteins before their translocation. The chain is Sec-independent protein translocase protein TatB from Paracidovorax citrulli (strain AAC00-1) (Acidovorax citrulli).